We begin with the raw amino-acid sequence, 71 residues long: Beta-defensin 9 (71 aa).

A signal peptide spans 1–23 (MRTLCSLLLICCLLFSYDTPVVG). 3 disulfides stabilise this stretch: C37–C66, C44–C59, and C49–C67.

The protein belongs to the beta-defensin family.

Its subcellular location is the secreted. Functionally, has antibacterial activity. This chain is Beta-defensin 9 (Defb9), found in Rattus norvegicus (Rat).